The primary structure comprises 141 residues: Galactose-6-phosphate isomerase subunit LacA (141 aa).

It belongs to the LacAB/RpiB family. As to quaternary structure, heteromultimeric protein consisting of LacA and LacB.

It carries out the reaction aldehydo-D-galactose 6-phosphate = keto-D-tagatose 6-phosphate. Its pathway is carbohydrate metabolism; D-galactose 6-phosphate degradation; D-tagatose 6-phosphate from D-galactose 6-phosphate: step 1/1. This is Galactose-6-phosphate isomerase subunit LacA from Streptococcus pneumoniae serotype 2 (strain D39 / NCTC 7466).